Here is a 104-residue protein sequence, read N- to C-terminus: V-type ATP synthase subunit F (104 aa).

It belongs to the V-ATPase F subunit family.

Functionally, produces ATP from ADP in the presence of a proton gradient across the membrane. This is V-type ATP synthase subunit F (atpF) from Thermus thermophilus (strain ATCC 27634 / DSM 579 / HB8).